The following is a 238-amino-acid chain: LexA repressor (238 aa).

The H-T-H motif DNA-binding region spans 26 to 46 (FDEMKDALDLASKSGIHRLIT). Active-site for autocatalytic cleavage activity residues include S158 and K196.

This sequence belongs to the peptidase S24 family. As to quaternary structure, homodimer.

It carries out the reaction Hydrolysis of Ala-|-Gly bond in repressor LexA.. Functionally, represses a number of genes involved in the response to DNA damage (SOS response), including recA and lexA. In the presence of single-stranded DNA, RecA interacts with LexA causing an autocatalytic cleavage which disrupts the DNA-binding part of LexA, leading to derepression of the SOS regulon and eventually DNA repair. The sequence is that of LexA repressor from Sinorhizobium medicae (strain WSM419) (Ensifer medicae).